We begin with the raw amino-acid sequence, 667 residues long: DNA ligase (667 aa).

Residues 34 to 38 (DQEYD), 83 to 84 (SL), and Glu-114 contribute to the NAD(+) site. The N6-AMP-lysine intermediate role is filled by Lys-116. The NAD(+) site is built by Arg-137, Glu-170, Lys-286, and Lys-310. Zn(2+)-binding residues include Cys-404, Cys-407, Cys-422, and Cys-427. One can recognise a BRCT domain in the interval 588 to 667 (HLAQKFENYR…EFQQLLSKED (80 aa)).

Belongs to the NAD-dependent DNA ligase family. LigA subfamily. The cofactor is Mg(2+). Mn(2+) is required as a cofactor.

The catalysed reaction is NAD(+) + (deoxyribonucleotide)n-3'-hydroxyl + 5'-phospho-(deoxyribonucleotide)m = (deoxyribonucleotide)n+m + AMP + beta-nicotinamide D-nucleotide.. DNA ligase that catalyzes the formation of phosphodiester linkages between 5'-phosphoryl and 3'-hydroxyl groups in double-stranded DNA using NAD as a coenzyme and as the energy source for the reaction. It is essential for DNA replication and repair of damaged DNA. The chain is DNA ligase from Spiroplasma citri.